A 411-amino-acid chain; its full sequence is Probable tRNA pseudouridine synthase D (411 aa).

Aspartate 79 serves as the catalytic Nucleophile. The region spanning 150 to 369 is the TRUD domain; that stretch reads GFPNYFGQQR…STGDRRIVSA (220 aa).

It belongs to the pseudouridine synthase TruD family.

It carries out the reaction uridine(13) in tRNA = pseudouridine(13) in tRNA. Its function is as follows. Could be responsible for synthesis of pseudouridine from uracil-13 in transfer RNAs. This Thermoplasma acidophilum (strain ATCC 25905 / DSM 1728 / JCM 9062 / NBRC 15155 / AMRC-C165) protein is Probable tRNA pseudouridine synthase D.